The chain runs to 119 residues: UPF0292 protein TV1259 (119 aa).

The 83-residue stretch at 11-93 (SIPIIVEGRN…YVDLYLWNFI (83 aa)) folds into the Toprim domain. Residues glutamate 17, aspartate 62, and aspartate 64 each contribute to the Mg(2+) site.

The protein belongs to the UPF0292 family. The cofactor is Mg(2+).

This Thermoplasma volcanium (strain ATCC 51530 / DSM 4299 / JCM 9571 / NBRC 15438 / GSS1) protein is UPF0292 protein TV1259.